The following is a 220-amino-acid chain: WAP four-disulfide core domain protein 1 (220 aa).

An N-terminal signal peptide occupies residues Met-1–Ala-31. Residues Lys-46–Pro-70 are disordered. The WAP domain maps to Arg-59–Val-108. Disulfide bonds link Cys-66–Cys-96, Cys-78–Cys-100, Cys-83–Cys-95, and Cys-89–Cys-104. Residues Glu-199–Gln-220 form a disordered region.

It localises to the secreted. Has growth inhibitory activity. The protein is WAP four-disulfide core domain protein 1 (WFDC1) of Homo sapiens (Human).